The chain runs to 375 residues: Aminomethyltransferase (375 aa).

The protein belongs to the GcvT family. In terms of assembly, the glycine cleavage system is composed of four proteins: P, T, L and H.

It carries out the reaction N(6)-[(R)-S(8)-aminomethyldihydrolipoyl]-L-lysyl-[protein] + (6S)-5,6,7,8-tetrahydrofolate = N(6)-[(R)-dihydrolipoyl]-L-lysyl-[protein] + (6R)-5,10-methylene-5,6,7,8-tetrahydrofolate + NH4(+). In terms of biological role, the glycine cleavage system catalyzes the degradation of glycine. This Symbiobacterium thermophilum (strain DSM 24528 / JCM 14929 / IAM 14863 / T) protein is Aminomethyltransferase.